Reading from the N-terminus, the 209-residue chain is Ribosomal RNA large subunit methyltransferase E (209 aa).

Glycine 63, tryptophan 65, aspartate 83, aspartate 99, and aspartate 124 together coordinate S-adenosyl-L-methionine. The active-site Proton acceptor is the lysine 164. The 19-residue stretch at 191-209 (EASRGRSREVYIVAMGYMG) folds into the TRAM domain.

The protein belongs to the class I-like SAM-binding methyltransferase superfamily. RNA methyltransferase RlmE family.

Its subcellular location is the cytoplasm. It carries out the reaction uridine(2552) in 23S rRNA + S-adenosyl-L-methionine = 2'-O-methyluridine(2552) in 23S rRNA + S-adenosyl-L-homocysteine + H(+). Functionally, specifically methylates the uridine in position 2552 of 23S rRNA at the 2'-O position of the ribose in the fully assembled 50S ribosomal subunit. This chain is Ribosomal RNA large subunit methyltransferase E, found in Histophilus somni (strain 129Pt) (Haemophilus somnus).